The chain runs to 675 residues: TOM1-like protein 9 (675 aa).

The region spanning Ala-9 to Pro-138 is the VHS domain. Disordered regions lie at residues Ser-144–Phe-181, Leu-270–Leu-322, Phe-371–Met-524, Gln-542–Pro-561, and Arg-622–Met-675. Residues Glu-180 to Ser-268 enclose the GAT domain. 2 stretches are compositionally biased toward polar residues: residues Gly-299–Leu-317 and Ser-372–Val-435. The span at Ser-436–Ser-451 shows a compositional bias: low complexity. Polar residues-rich tracts occupy residues Gln-470–Pro-481 and Pro-488–Met-524. Residues Asn-646–Lys-661 are compositionally biased toward basic and acidic residues.

Belongs to the TOM1 family. In terms of assembly, interacts with ELC/VPS23A and ELCL/VPS23B. In terms of tissue distribution, ubiquitously expressed.

Its subcellular location is the cytoplasm. It localises to the membrane. Might contribute to the loading of the ESCRT machinery. This is TOM1-like protein 9 from Arabidopsis thaliana (Mouse-ear cress).